The primary structure comprises 345 residues: Nicotinate-nucleotide--dimethylbenzimidazole phosphoribosyltransferase (345 aa).

The active-site Proton acceptor is Glu-311.

The protein belongs to the CobT family.

The catalysed reaction is 5,6-dimethylbenzimidazole + nicotinate beta-D-ribonucleotide = alpha-ribazole 5'-phosphate + nicotinate + H(+). It participates in nucleoside biosynthesis; alpha-ribazole biosynthesis; alpha-ribazole from 5,6-dimethylbenzimidazole: step 1/2. Its function is as follows. Catalyzes the synthesis of alpha-ribazole-5'-phosphate from nicotinate mononucleotide (NAMN) and 5,6-dimethylbenzimidazole (DMB). The protein is Nicotinate-nucleotide--dimethylbenzimidazole phosphoribosyltransferase of Janthinobacterium sp. (strain Marseille) (Minibacterium massiliensis).